Here is a 311-residue protein sequence, read N- to C-terminus: Solute carrier family 25 member 36-A (311 aa).

Solcar repeat units follow at residues 4-108 (RDTL…SKEK), 116-203 (DSTQ…IKRK), and 224-308 (SDFV…VVYL). Helical transmembrane passes span 7 to 27 (LVHL…TCPL), 41 to 57 (FYIS…ASVA), 111 to 131 (NVFD…AGFT), 180 to 200 (MSAS…YESI), 226 to 246 (FVGM…IAYP), and 291 to 311 (QIPN…LLNG).

Belongs to the mitochondrial carrier (TC 2.A.29) family.

It is found in the mitochondrion inner membrane. This chain is Solute carrier family 25 member 36-A (slc25a36a), found in Danio rerio (Zebrafish).